Consider the following 353-residue polypeptide: Putative protein SPATA31J1 (353 aa).

Residues 34–54 (IPQIIHFVLFVVFSLVILIIL) traverse the membrane as a helical segment. A disordered region spans residues 122–271 (EGSSHHLPRQ…NPGWVSWSDS (150 aa)). The segment covering 182–195 (SVESLGSPSSLSSS) has biased composition (low complexity). Residues 211–221 (PPASTLSPNPT) are compositionally biased toward polar residues. The segment covering 222–237 (SSTESLGYLSSLSSSQ) has biased composition (low complexity). A compositionally biased stretch (basic residues) spans 244–262 (PLKHPSHKPRGRSLPRRRN).

It belongs to the SPATA31 family.

The protein localises to the membrane. The polypeptide is Putative protein SPATA31J1 (Homo sapiens (Human)).